Here is a 216-residue protein sequence, read N- to C-terminus: uncharacterized protein (216 aa).

One can recognise a 4Fe-4S ferredoxin-type domain in the interval 18 to 47 (PPDSPIEDRCGSCNICVDSCPTGALVQGGQ). The [4Fe-4S] cluster site is built by Cys-27, Cys-30, Cys-33, Cys-37, Cys-79, Cys-82, and Cys-86.

This is an uncharacterized protein from Geobacillus stearothermophilus (Bacillus stearothermophilus).